Consider the following 315-residue polypeptide: Ribose-phosphate pyrophosphokinase (315 aa).

ATP contacts are provided by residues 41 to 43 (DGE) and 100 to 101 (RQ). Mg(2+) is bound by residues histidine 134 and aspartate 173. Residue lysine 196 is part of the active site. Residues arginine 198, aspartate 222, and 226-230 (DTAGT) each bind D-ribose 5-phosphate.

It belongs to the ribose-phosphate pyrophosphokinase family. Class I subfamily. As to quaternary structure, homohexamer. Requires Mg(2+) as cofactor.

It localises to the cytoplasm. It catalyses the reaction D-ribose 5-phosphate + ATP = 5-phospho-alpha-D-ribose 1-diphosphate + AMP + H(+). The protein operates within metabolic intermediate biosynthesis; 5-phospho-alpha-D-ribose 1-diphosphate biosynthesis; 5-phospho-alpha-D-ribose 1-diphosphate from D-ribose 5-phosphate (route I): step 1/1. Its function is as follows. Involved in the biosynthesis of the central metabolite phospho-alpha-D-ribosyl-1-pyrophosphate (PRPP) via the transfer of pyrophosphoryl group from ATP to 1-hydroxyl of ribose-5-phosphate (Rib-5-P). The chain is Ribose-phosphate pyrophosphokinase from Bacillus caldolyticus.